Consider the following 466-residue polypeptide: 20-hydroxyecdysone protein (466 aa).

The N-terminal stretch at 1–16 (MKPVALILVFLAISQA) is a signal peptide. The stretch at 48–50 (EVK) is one 1; approximate repeat. A 16 X repeats region spans residues 48–157 (EVKAEEVKPE…EIKKEATEIK (110 aa)). A 2; approximate repeat occupies 53–55 (EVK). Residues 55 to 94 (KPEEVKPIAQEEKAKDLKEEVKPEIKPEIKEQPKPDIKDE) are disordered. One copy of the 3; approximate repeat lies at 58-60 (EVK). The 4; approximate repeat unit spans residues 70–72 (DLK). One copy of the 5; approximate repeat lies at 74–76 (EVK). A 6; approximate repeat occupies 78–80 (EIK). The 7; approximate repeat unit spans residues 82–84 (EIK). An 8; approximate repeat occupies 90-92 (DIK). One copy of the 9; approximate repeat lies at 94–96 (EIK). One copy of the 10; approximate repeat lies at 98 to 100 (DLK). The stretch at 102-104 (DIK) is one 11; approximate repeat. The stretch at 106–108 (ELK) is one 12; approximate repeat. The disordered stretch occupies residues 119–220 (PNAKPLELKE…QQSTTQGNFV (102 aa)). The segment covering 124–160 (LELKEKSLEAEEKPQEIKEEVQQPEIKKEATEIKEEP) has biased composition (basic and acidic residues). The stretch at 125 to 127 (ELK) is one 13; approximate repeat. Residues 139 to 141 (EIK) form a 14; approximate repeat. One copy of the 15; approximate repeat lies at 148–150 (EIK). A 16; approximate repeat occupies 155–157 (EIK). Over residues 170-180 (AEETVVVPAEE) the composition is skewed to low complexity. The segment covering 185–194 (PVEQEQSENQ) has biased composition (polar residues). Residues 203–216 (QATQATPTQQSTTQ) show a composition bias toward low complexity. Asn-294 and Asn-352 each carry an N-linked (GlcNAc...) asparagine glycan. The disordered stretch occupies residues 378–435 (RPQNAPAAAPATQATEKPAVDDKIDPANDEVGEFVPESDNELRASGENIDDSFEDAGV). The segment covering 379–394 (PQNAPAAAPATQATEK) has biased composition (low complexity). Over residues 404–416 (ANDEVGEFVPESD) the composition is skewed to acidic residues.

Its subcellular location is the secreted. Its function is as follows. Probably has an essential role in embryogenesis, induces morphogenesis of imaginal disks, and may participate in multimolecular aggregates. This is 20-hydroxyecdysone protein (ImpE2) from Drosophila melanogaster (Fruit fly).